The primary structure comprises 488 residues: 3-octaprenyl-4-hydroxybenzoate carboxy-lyase (488 aa).

Position 172 (Asn172) interacts with Mn(2+). Prenylated FMN-binding positions include 175 to 177 (IYR), 189 to 191 (RWL), and 194 to 195 (RG). Glu238 contributes to the Mn(2+) binding site. The Proton donor role is filled by Asp287.

Belongs to the UbiD family. In terms of assembly, homohexamer. Prenylated FMN serves as cofactor. Mn(2+) is required as a cofactor.

It is found in the cell membrane. The enzyme catalyses a 4-hydroxy-3-(all-trans-polyprenyl)benzoate + H(+) = a 2-(all-trans-polyprenyl)phenol + CO2. It participates in cofactor biosynthesis; ubiquinone biosynthesis. Its function is as follows. Catalyzes the decarboxylation of 3-octaprenyl-4-hydroxy benzoate to 2-octaprenylphenol, an intermediate step in ubiquinone biosynthesis. This is 3-octaprenyl-4-hydroxybenzoate carboxy-lyase from Alteromonas mediterranea (strain DSM 17117 / CIP 110805 / LMG 28347 / Deep ecotype).